Here is a 198-residue protein sequence, read N- to C-terminus: Segregation and condensation protein B (198 aa).

The disordered stretch occupies residues 168-198 (KLADPATDEPDQNEMDLFFDRFNQSKEQEEE).

The protein belongs to the ScpB family. In terms of assembly, homodimer. Homodimerization may be required to stabilize the binding of ScpA to the Smc head domains. Component of a cohesin-like complex composed of ScpA, ScpB and the Smc homodimer, in which ScpA and ScpB bind to the head domain of Smc. The presence of the three proteins is required for the association of the complex with DNA.

The protein resides in the cytoplasm. Functionally, participates in chromosomal partition during cell division. May act via the formation of a condensin-like complex containing Smc and ScpA that pull DNA away from mid-cell into both cell halves. The polypeptide is Segregation and condensation protein B (Listeria monocytogenes serotype 4b (strain CLIP80459)).